The sequence spans 191 residues: GTP cyclohydrolase 1 (191 aa).

3 residues coordinate Zn(2+): Cys-80, His-83, and Cys-151.

This sequence belongs to the GTP cyclohydrolase I family. As to quaternary structure, toroid-shaped homodecamer, composed of two pentamers of five dimers.

The enzyme catalyses GTP + H2O = 7,8-dihydroneopterin 3'-triphosphate + formate + H(+). It functions in the pathway cofactor biosynthesis; 7,8-dihydroneopterin triphosphate biosynthesis; 7,8-dihydroneopterin triphosphate from GTP: step 1/1. This is GTP cyclohydrolase 1 from Nitrosospira multiformis (strain ATCC 25196 / NCIMB 11849 / C 71).